A 404-amino-acid polypeptide reads, in one-letter code: uncharacterized protein (404 aa).

A run of 6 helical transmembrane segments spans residues 37-57 (LLIL…FVQF), 92-112 (IYNV…FVLG), 122-142 (LLTL…SYIP), 188-208 (MFYA…ILII), 230-250 (IGGI…TIGT), and 272-292 (AFFL…LGIF).

The protein localises to the cell membrane. This is an uncharacterized protein from Mycoplasma pneumoniae (strain ATCC 29342 / M129 / Subtype 1) (Mycoplasmoides pneumoniae).